Here is a 146-residue protein sequence, read N- to C-terminus: MAAYLLAVAILFCIQGWPSGTVQGQVMPFMEVFKRSVCQTRETLVPVLEEHPSEIADLFKPSCATVLRCGGCCSDESLACTAVGKRSVGREILRVDPRKGTSKIEVMQFTEHTDCECRPRSRSGVDSGKRKRNPEEGEPRAKFPFV.

Positions 1–24 (MAAYLLAVAILFCIQGWPSGTVQG) are cleaved as a signal peptide. Q25 bears the Pyrrolidone carboxylic acid mark. 3 disulfide bridges follow: C38-C80, C69-C115, and C73-C117. A disordered region spans residues 116 to 146 (ECRPRSRSGVDSGKRKRNPEEGEPRAKFPFV). Residues 133 to 146 (NPEEGEPRAKFPFV) are compositionally biased toward basic and acidic residues.

This sequence belongs to the PDGF/VEGF growth factor family. Snake venom VEGF subfamily. Homodimer; disulfide-linked. Expressed by the venom gland.

The protein localises to the secreted. Its function is as follows. Snake venom VEGFs that may contribute to venom dispersion and prey subjugation by inducing vascular permeability and hypotension. This protein induces an increase in capillary permeability after intradermal injection, in a VEGFR-2 (KDR) dependent manner. In addition, it provokes a drastic hypotensive effect after intravenous injection. The hypotension is mediated by nitric oxide (NO), which is produced by VEGF-activated endothelium NO synthase. Also induces angiogenesis in vitro. Unlike other crotalid VEGFs, this protein probably interacts with VEGF receptor-2 (KDR). The protein is Vascular endothelial growth factor isoform GtVF of Gloydius tsushimaensis (Tsushima Island pitviper).